Reading from the N-terminus, the 451-residue chain is Prenyltransferase anuH (451 aa).

The dimethylallyl diphosphate site is built by Arg105, Lys189, Tyr191, Lys257, Tyr259, and Tyr422.

It belongs to the tryptophan dimethylallyltransferase family.

It catalyses the reaction (8S)-annullatin E + dimethylallyl diphosphate = (8S)-annullatin J + diphosphate. Its pathway is secondary metabolite biosynthesis. In terms of biological role, cytochrome P450 monooxygenase; part of the gene cluster that mediates the biosynthesis of annullatin D, an alkylated aromatic polyketide with a fused dihydrobenzofuran lactone ring system that exhibits potent agonistic activities toward the cannabinoid receptors. Within the pathway, anuH uses dimethylallyl diphosphate (DMAPP) to prenylate (8S)-annullatin E to produce (8S)-annullatin J. Geranyl and farnesyl diphosphate are not consumed by anuH for prenylation. 2-hydroxymethyl-3-pentylphenol, without the hydroxyl group at the side chain, is also accepted by anuH, but only with low conversion yield. The annullatin backbone 2-hydroxymethyl-3-pentylphenol is assembled from one acetyl-CoA starter unit and 5 malonyl-CoA elongation units by cooperation of the highly reducing polyketide synthase anuA, the short-chain dehydrogenase anuB and the oxidoreductase anuC, before being hydroxylated at the C-5 alkyl chain by the cytochrome P450 monooxygenase anuE to form (8S)-annullatin E. The prenyltransferase anuH subsequently installs one isoprenyl group at the benzene ring to form (8S)-annullatin J. Enzymatic or nonenzymatic dihydro-benzofuran ring formation between the prenyl and the phenolic hydroxyl groups in (8S)-annullatin J results in two diastereomers (2S,9S)-annullatin H and compound 12. The intermediate (2S,9S)-annullatin H is then converted to (2S,9S)-annullatin D by the FAD-linked oxidoreductase anuG-catalyzed five-member lactone ring formation. The isomer 12 acts as a substrate for the short-chain dehydrogenase anuF and is oxidized to (2R)-annullatin F, which is subsequently acetylated by an acetyltransferase leading to (2R)-annullatin G formation. The remaining enzymes identified within the cluster, anuD, anuI and anuJ, seem not to be involved in annullatin biosynthesis. The chain is Prenyltransferase anuH from Penicillium roqueforti (strain FM164).